A 180-amino-acid polypeptide reads, in one-letter code: UPF0227 protein YcfP (180 aa).

The protein belongs to the UPF0227 family.

The chain is UPF0227 protein YcfP from Salmonella gallinarum (strain 287/91 / NCTC 13346).